Here is a 211-residue protein sequence, read N- to C-terminus: Large ribosomal subunit protein uL3 (211 aa).

This sequence belongs to the universal ribosomal protein uL3 family. In terms of assembly, part of the 50S ribosomal subunit. Forms a cluster with proteins L14 and L19.

Its function is as follows. One of the primary rRNA binding proteins, it binds directly near the 3'-end of the 23S rRNA, where it nucleates assembly of the 50S subunit. This is Large ribosomal subunit protein uL3 from Geotalea daltonii (strain DSM 22248 / JCM 15807 / FRC-32) (Geobacter daltonii).